A 349-amino-acid chain; its full sequence is 4-hydroxythreonine-4-phosphate dehydrogenase (349 aa).

Substrate contacts are provided by H141 and T142. Positions 176, 221, and 276 each coordinate a divalent metal cation. Positions 284, 293, and 302 each coordinate substrate.

It belongs to the PdxA family. As to quaternary structure, homodimer. Requires Zn(2+) as cofactor. The cofactor is Mg(2+). It depends on Co(2+) as a cofactor.

The protein localises to the cytoplasm. The catalysed reaction is 4-(phosphooxy)-L-threonine + NAD(+) = 3-amino-2-oxopropyl phosphate + CO2 + NADH. It participates in cofactor biosynthesis; pyridoxine 5'-phosphate biosynthesis; pyridoxine 5'-phosphate from D-erythrose 4-phosphate: step 4/5. Its function is as follows. Catalyzes the NAD(P)-dependent oxidation of 4-(phosphooxy)-L-threonine (HTP) into 2-amino-3-oxo-4-(phosphooxy)butyric acid which spontaneously decarboxylates to form 3-amino-2-oxopropyl phosphate (AHAP). The protein is 4-hydroxythreonine-4-phosphate dehydrogenase of Methylorubrum extorquens (strain PA1) (Methylobacterium extorquens).